The chain runs to 900 residues: Phosphoenolpyruvate carboxylase (900 aa).

Catalysis depends on residues His-140 and Lys-568.

The protein belongs to the PEPCase type 1 family. Mg(2+) serves as cofactor.

It catalyses the reaction oxaloacetate + phosphate = phosphoenolpyruvate + hydrogencarbonate. Forms oxaloacetate, a four-carbon dicarboxylic acid source for the tricarboxylic acid cycle. This is Phosphoenolpyruvate carboxylase from Neisseria gonorrhoeae (strain ATCC 700825 / FA 1090).